Reading from the N-terminus, the 489-residue chain is Lysine--tRNA ligase (489 aa).

Positions 399 and 406 each coordinate Mg(2+).

The protein belongs to the class-II aminoacyl-tRNA synthetase family. Homodimer. It depends on Mg(2+) as a cofactor.

The protein localises to the cytoplasm. The enzyme catalyses tRNA(Lys) + L-lysine + ATP = L-lysyl-tRNA(Lys) + AMP + diphosphate. In Roseiflexus castenholzii (strain DSM 13941 / HLO8), this protein is Lysine--tRNA ligase.